Here is a 477-residue protein sequence, read N- to C-terminus: UDP-N-acetylmuramoylalanine--D-glutamate ligase (477 aa).

125–131 contributes to the ATP binding site; the sequence is GTNGKST.

It belongs to the MurCDEF family.

It is found in the cytoplasm. The catalysed reaction is UDP-N-acetyl-alpha-D-muramoyl-L-alanine + D-glutamate + ATP = UDP-N-acetyl-alpha-D-muramoyl-L-alanyl-D-glutamate + ADP + phosphate + H(+). Its pathway is cell wall biogenesis; peptidoglycan biosynthesis. Cell wall formation. Catalyzes the addition of glutamate to the nucleotide precursor UDP-N-acetylmuramoyl-L-alanine (UMA). This chain is UDP-N-acetylmuramoylalanine--D-glutamate ligase, found in Rhodospirillum rubrum (strain ATCC 11170 / ATH 1.1.1 / DSM 467 / LMG 4362 / NCIMB 8255 / S1).